The chain runs to 205 residues: Thymidylate kinase (205 aa).

11 to 18 (GPEGSGKT) contributes to the ATP binding site.

Belongs to the thymidylate kinase family.

The enzyme catalyses dTMP + ATP = dTDP + ADP. Functionally, phosphorylation of dTMP to form dTDP in both de novo and salvage pathways of dTTP synthesis. This Clostridium novyi (strain NT) protein is Thymidylate kinase.